The primary structure comprises 436 residues: Elongation factor 1-gamma-A (436 aa).

The GST N-terminal domain occupies 2–87 (AGGTLYTYPD…YVGNDELRGT (86 aa)). Residues 88 to 221 (TRLHQAQVIQ…KMAQFDAKKF (134 aa)) enclose the GST C-terminal domain. 2 stretches are compositionally biased toward basic and acidic residues: residues 221 to 249 (FAEM…EKKK) and 265 to 278 (SEKA…SKDP). Residues 221–278 (FAEMQPKKETPKKEKPAKEPKKEKEEKKKAAPTPAPAPEDDLDESEKALAAEPKSKDP) are disordered. Residues 275–436 (SKDPYAHLPK…KPFNQGKIFK (162 aa)) form the EF-1-gamma C-terminal domain.

In terms of assembly, EF-1 is composed of four subunits: alpha, beta, delta, and gamma. In terms of processing, phosphorylated by CDK1. Post-translationally, the N-terminus is blocked.

Functionally, probably plays a role in anchoring the complex to other cellular components. In Xenopus laevis (African clawed frog), this protein is Elongation factor 1-gamma-A (eef1g-a).